A 471-amino-acid polypeptide reads, in one-letter code: Tryptophanase (471 aa).

3 positions are modified to N6-acetyllysine: lysine 5, lysine 115, and lysine 156. Lysine 270 bears the N6-(pyridoxal phosphate)lysine mark. Residue lysine 450 is modified to N6-acetyllysine.

This sequence belongs to the beta-eliminating lyase family. As to quaternary structure, homotetramer. The cofactor is pyridoxal 5'-phosphate.

It carries out the reaction L-tryptophan + H2O = indole + pyruvate + NH4(+). It participates in amino-acid degradation; L-tryptophan degradation via pyruvate pathway; indole and pyruvate from L-tryptophan: step 1/1. The protein is Tryptophanase of Escherichia fergusonii (strain ATCC 35469 / DSM 13698 / CCUG 18766 / IAM 14443 / JCM 21226 / LMG 7866 / NBRC 102419 / NCTC 12128 / CDC 0568-73).